The following is a 420-amino-acid chain: Disease resistance protein CHS1 (420 aa).

Positions 12–167 constitute a TIR domain; that stretch reads RELDVFLSFS…QIADDIRLMF (156 aa). Glutamate 86 is a catalytic residue. The NB-ARC domain maps to 185–406; it reads MKALYALLAL…KDIKEVWKIM (222 aa).

Mostly expressed in leaves and flowers (mainly in sepals), and, at a lower intensity, in stems. Present at low levels in roots and seeds.

The protein resides in the cytoplasm. Its subcellular location is the nucleus. It carries out the reaction NAD(+) + H2O = ADP-D-ribose + nicotinamide + H(+). Its function is as follows. Confers resistance to low temperatures by limiting chloroplast damage and cell death, thus maintaining growth homeostasis. Regulates steryl-esters and sterols accumulation. Limits leaf necrosis associated with virulent bacterial infection (e.g. Pseudomonas syringae pv. tomato DC3000). In Arabidopsis thaliana (Mouse-ear cress), this protein is Disease resistance protein CHS1.